A 340-amino-acid polypeptide reads, in one-letter code: Functional amyloid subunit FapC (340 aa).

The N-terminal stretch at 1–24 (MKATMVLTPLALAMAAVLSVSAYA) is a signal peptide. A FapC_R1 repeat occupies 67–100 (NNASVSGSIKDASGNVGVNVAAGDNNQQANAAAL). The tract at residues 101–133 (ASADASFVFGTATASTSVLQSGYGNTLNNYSNP) is linker 1. Residues 134 to 167 (NTASLSNSANNVSGNLGVNVAAGNFNQQKNDLAA) form a FapC_R2 repeat. Positions 168–290 (AVSNGQYSTA…AIVGFKTPVT (123 aa)) are linker 2. The stretch at 291–324 (NNASLSNSLQNVSGNVGVNIAAGGGNQQSNSLSI) is one FapC_R3 repeat. The Cys-X-X-Cys motif lies at 328–331 (CSSC).

It belongs to the FapB/FapC family. The major component of purified amyloid fibrils. Fibrils are resistant to boiling in 2% (weight/vol) SDS and require &gt;90% (vol/vol) formic acid to dissolve. Interacts with FapA in vitro.

It localises to the fimbrium. The protein localises to the secreted. In terms of biological role, the major functional amyloid subunit in this bacterium. Upon overexpression of the endogenous six-gene locus (fapA-fapF), cells form large clumps during liquid growth, make large amounts of biofilm and produce amyloid fibrils. The polypeptide is Functional amyloid subunit FapC (Pseudomonas aeruginosa (strain ATCC 15692 / DSM 22644 / CIP 104116 / JCM 14847 / LMG 12228 / 1C / PRS 101 / PAO1)).